The primary structure comprises 209 residues: DNA ADP-ribosyl transferase (209 aa).

The region spanning 9 to 209 (TPIYHITHID…RVCIRKDWYY (201 aa)) is the DarT domain. NAD(+) contacts are provided by residues 13–15 (HIT), Gly-22, and Leu-30. Positions 35 to 53 (SPPKQRSIAYAHIQERRNR) are NAD(+)-binding element. Residues 44–50 (YAHIQER) mediate DNA binding. Arg-51 contacts NAD(+). Arg-51 serves as the catalytic Proton acceptor. 3 consecutive DNA-binding regions follow at residues 75–80 (RSPMLY), 145–148 (SYWA), and 154–158 (REKKQ). The interval 116 to 160 (TDRHGVLSHARFFRQLEELAQLDWEAIQASYWADPPELREKKQAE) is ADP-ribosylating turn-turn loop. The active site involves Glu-160.

The protein belongs to the DarT ADP-ribosyltransferase family. As to quaternary structure, interacts with cognate antitoxin DarG (via C-terminus); this heterodimeric complex neutralizes the toxic effect of DarT by preventing ssDNA binding to DarT and consequently inactivating the toxin by direct protein-protein interactions.

The enzyme catalyses a thymidine in DNA + NAD(+) = an N-(ADP-alpha-D-ribosyl)-thymidine in DNA + nicotinamide + H(+). In terms of biological role, toxic component of the hybrid type II/IV toxin-antitoxin (TA) system DarTG, which plays a crucial role in controlling bacterial growth and bacteriophage infection. In case of phage infection, DarT toxin ADP-ribosylates DNA, which inhibits both viral DNA and RNA synthesis and leads to abortive infection. ADP-ribosylates ssDNA on the second thymidine of the consensus sequence 5'-TNTC-3'; the protein does not auto-modify. Arg-51 is highly flexible, allowing it to assume multiple positions in the crystal structures. Its toxic effect is neutralized by cognate antitoxin DarG. The chain is DNA ADP-ribosyl transferase from Thermus sp. (strain 2.9).